The following is a 177-amino-acid chain: Cyclic pyranopterin monophosphate synthase 3 (177 aa).

Substrate is bound by residues 79-81 (LCH) and 116-117 (ME). Aspartate 131 is a catalytic residue. The tract at residues 150-177 (KSGGRSGHYRRHDADVKPSDGGSTEDGC) is disordered.

Belongs to the MoaC family. Homohexamer; trimer of dimers.

The catalysed reaction is (8S)-3',8-cyclo-7,8-dihydroguanosine 5'-triphosphate = cyclic pyranopterin phosphate + diphosphate. The protein operates within cofactor biosynthesis; molybdopterin biosynthesis. Functionally, catalyzes the conversion of (8S)-3',8-cyclo-7,8-dihydroguanosine 5'-triphosphate to cyclic pyranopterin monophosphate (cPMP). The protein is Cyclic pyranopterin monophosphate synthase 3 (moaC3) of Mycobacterium bovis (strain ATCC BAA-935 / AF2122/97).